A 167-amino-acid polypeptide reads, in one-letter code: MAEITFKGGPVTLVGQEVKVGDQAPDFTVLTNSLEEKSLADMKGKVTIISVIPSIDTGVCDAQTRRFNEEAAKLGDVNVYTISADLPFAQARWCGANGIDKVETLSDHRDMSFGEAFGVYIKELRLLARSVFVLDENGKVVYAEYVSEATNHPNYEKPIEAAKALVK.

The 150-residue stretch at valine 18–lysine 167 folds into the Thioredoxin domain. The active-site Cysteine sulfenic acid (-SOH) intermediate is the cysteine 60. Residues cysteine 60 and cysteine 94 are joined by a disulfide bond.

It belongs to the peroxiredoxin family. Tpx subfamily. In terms of assembly, homodimer.

It carries out the reaction a hydroperoxide + [thioredoxin]-dithiol = an alcohol + [thioredoxin]-disulfide + H2O. Functionally, thiol-specific peroxidase that catalyzes the reduction of hydrogen peroxide and organic hydroperoxides to water and alcohols, respectively. Plays a role in cell protection against oxidative stress by detoxifying peroxides. This Bacillus subtilis (strain 168) protein is Thiol peroxidase.